We begin with the raw amino-acid sequence, 139 residues long: MSVNYMRLLCLMACCFSVCLAYRPSGNSYRSGGYGEYIKPVETAEAQAAALTNAAGAAASSAKLDGADWYALNRYGWEQGKPLLVKPYGPLDNLYAAALPPRAFVAEIDPVFKRNSYGGAYGERTVTLNTGSKLAVSAA.

The N-terminal stretch at 1-21 (MSVNYMRLLCLMACCFSVCLA) is a signal peptide.

Belongs to the chorion protein S16 family.

The protein localises to the secreted. In terms of biological role, chorion membrane (egg shell) protein; plays a role in protecting the egg from the environment. The polypeptide is Chorion protein S16 (Cp16) (Drosophila virilis (Fruit fly)).